A 78-amino-acid chain; its full sequence is Large ribosomal subunit protein bL28 (78 aa).

It belongs to the bacterial ribosomal protein bL28 family.

The polypeptide is Large ribosomal subunit protein bL28 (Thermosynechococcus vestitus (strain NIES-2133 / IAM M-273 / BP-1)).